Reading from the N-terminus, the 1049-residue chain is Probable disease resistance protein RF9 (1049 aa).

The stretch at 25–41 (QGVEDQVTELKRDLNLL) forms a coiled coil. Residues 139-158 (GYKQPQGDKQREMRPRFSKD) form a disordered region. Positions 144 to 158 (QGDKQREMRPRFSKD) are enriched in basic and acidic residues. In terms of domain architecture, NB-ARC spans 147-460 (KQREMRPRFS…AEGIFQPRHY (314 aa)). Residue 190–197 (GMGGLGKT) coordinates ATP. LRR repeat units lie at residues 584–608 (LELL…SIGQ), 609–634 (LIHL…NLKL), 657–682 (MQQL…NLVK), 683–707 (LETL…RLRT), 776–799 (PSHL…ILEK), 800–827 (LHQL…GFPQ), 849–873 (MPVL…HLPS), 896–923 (LVHL…GFPQ), 945–968 (MPQL…GFPQ), and 990–1015 (MPLL…RFIY).

The protein belongs to the disease resistance NB-LRR family.

Potential disease resistance protein. This chain is Probable disease resistance protein RF9 (RF9), found in Arabidopsis thaliana (Mouse-ear cress).